A 134-amino-acid chain; its full sequence is Cytochrome b (134 aa).

Helical transmembrane passes span 33-53 (FGSL…FLAM), 77-98 (WLLR…YLHV), and 113-133 (WNIG…GYVL). Positions 83 and 97 each coordinate heme b.

The protein belongs to the cytochrome b family. The cytochrome bc1 complex contains 11 subunits: 3 respiratory subunits (MT-CYB, CYC1 and UQCRFS1), 2 core proteins (UQCRC1 and UQCRC2) and 6 low-molecular weight proteins (UQCRH/QCR6, UQCRB/QCR7, UQCRQ/QCR8, UQCR10/QCR9, UQCR11/QCR10 and a cleavage product of UQCRFS1). This cytochrome bc1 complex then forms a dimer. It depends on heme b as a cofactor.

It localises to the mitochondrion inner membrane. Component of the ubiquinol-cytochrome c reductase complex (complex III or cytochrome b-c1 complex) that is part of the mitochondrial respiratory chain. The b-c1 complex mediates electron transfer from ubiquinol to cytochrome c. Contributes to the generation of a proton gradient across the mitochondrial membrane that is then used for ATP synthesis. The protein is Cytochrome b (MT-CYB) of Sturnira tildae (Tilda's yellow-shouldered bat).